Consider the following 134-residue polypeptide: Profilin-4 (134 aa).

Belongs to the profilin family. In terms of assembly, occurs in many kinds of cells as a complex with monomeric actin in a 1:1 ratio. Specifically expressed in mature and germinating pollen grains, and growing pollen tubes (at protein level).

It is found in the cytoplasm. Its subcellular location is the cytoskeleton. Functionally, binds to actin monomers and regulates the organization of the actin cytoskeleton. At high concentrations, profilin prevents the polymerization of actin, whereas it enhances it at low concentrations. At low concentrations, associates with the poly-proline motif of formins to enhance actin filament elongation rate. Acts redundantly with PRF5 to regulate apical actin polymerization at the tip of pollen tube and control polarized pollen tube growth. Functions probably by favoring formin-mediated actin polymerization at pollen tube tips. The polypeptide is Profilin-4 (Arabidopsis thaliana (Mouse-ear cress)).